Consider the following 213-residue polypeptide: Holliday junction branch migration complex subunit RuvA (213 aa).

The tract at residues 1 to 63 (MISFLRGTVA…EDSMTLFGFA (63 aa)) is domain I. Positions 64-140 (DDDEREVFEV…LVPHGTAPAA (77 aa)) are domain II. The segment at 140–144 (AATTA) is flexible linker. Residues 145–213 (AEASWKPQVV…RAGNRVGSRG (69 aa)) are domain III.

Belongs to the RuvA family. Homotetramer. Forms an RuvA(8)-RuvB(12)-Holliday junction (HJ) complex. HJ DNA is sandwiched between 2 RuvA tetramers; dsDNA enters through RuvA and exits via RuvB. An RuvB hexamer assembles on each DNA strand where it exits the tetramer. Each RuvB hexamer is contacted by two RuvA subunits (via domain III) on 2 adjacent RuvB subunits; this complex drives branch migration. In the full resolvosome a probable DNA-RuvA(4)-RuvB(12)-RuvC(2) complex forms which resolves the HJ.

The protein resides in the cytoplasm. Its function is as follows. The RuvA-RuvB-RuvC complex processes Holliday junction (HJ) DNA during genetic recombination and DNA repair, while the RuvA-RuvB complex plays an important role in the rescue of blocked DNA replication forks via replication fork reversal (RFR). RuvA specifically binds to HJ cruciform DNA, conferring on it an open structure. The RuvB hexamer acts as an ATP-dependent pump, pulling dsDNA into and through the RuvAB complex. HJ branch migration allows RuvC to scan DNA until it finds its consensus sequence, where it cleaves and resolves the cruciform DNA. The protein is Holliday junction branch migration complex subunit RuvA of Pseudarthrobacter chlorophenolicus (strain ATCC 700700 / DSM 12829 / CIP 107037 / JCM 12360 / KCTC 9906 / NCIMB 13794 / A6) (Arthrobacter chlorophenolicus).